A 937-amino-acid polypeptide reads, in one-letter code: Isoleucine--tRNA ligase (937 aa).

Positions 58–68 match the 'HIGH' region motif; that stretch reads PYANGNIHIGH. Residue glutamate 560 participates in L-isoleucyl-5'-AMP binding. Positions 601 to 605 match the 'KMSKS' region motif; the sequence is KMSKS. Lysine 604 lines the ATP pocket. Zn(2+) is bound by residues cysteine 900, cysteine 903, cysteine 920, and cysteine 923.

This sequence belongs to the class-I aminoacyl-tRNA synthetase family. IleS type 1 subfamily. Monomer. Zn(2+) is required as a cofactor.

It is found in the cytoplasm. It catalyses the reaction tRNA(Ile) + L-isoleucine + ATP = L-isoleucyl-tRNA(Ile) + AMP + diphosphate. Its function is as follows. Catalyzes the attachment of isoleucine to tRNA(Ile). As IleRS can inadvertently accommodate and process structurally similar amino acids such as valine, to avoid such errors it has two additional distinct tRNA(Ile)-dependent editing activities. One activity is designated as 'pretransfer' editing and involves the hydrolysis of activated Val-AMP. The other activity is designated 'posttransfer' editing and involves deacylation of mischarged Val-tRNA(Ile). This is Isoleucine--tRNA ligase from Thioalkalivibrio sulfidiphilus (strain HL-EbGR7).